We begin with the raw amino-acid sequence, 319 residues long: ATP-dependent 6-phosphofructokinase (319 aa).

Gly11 serves as a coordination point for ATP. Residue Arg21–Arg25 coordinates ADP. Residues Arg72–Cys73 and Gly102–Ser105 each bind ATP. Mg(2+) is bound at residue Asp103. Residue Thr125–Asp127 participates in substrate binding. Asp127 (proton acceptor) is an active-site residue. Arg154 contributes to the ADP binding site. Substrate is bound by residues Arg162 and Met169 to Arg171. ADP is bound by residues Gly185–Glu187, Lys211, and Lys213–His215. Substrate contacts are provided by residues Glu222, Arg243, and His249 to Arg252.

The protein belongs to the phosphofructokinase type A (PFKA) family. ATP-dependent PFK group I subfamily. Prokaryotic clade 'B1' sub-subfamily. Homotetramer. It depends on Mg(2+) as a cofactor.

Its subcellular location is the cytoplasm. It carries out the reaction beta-D-fructose 6-phosphate + ATP = beta-D-fructose 1,6-bisphosphate + ADP + H(+). It functions in the pathway carbohydrate degradation; glycolysis; D-glyceraldehyde 3-phosphate and glycerone phosphate from D-glucose: step 3/4. Allosterically activated by ADP and other diphosphonucleosides, and allosterically inhibited by phosphoenolpyruvate. Catalyzes the phosphorylation of D-fructose 6-phosphate to fructose 1,6-bisphosphate by ATP, the first committing step of glycolysis. The polypeptide is ATP-dependent 6-phosphofructokinase (Clostridium botulinum (strain ATCC 19397 / Type A)).